The primary structure comprises 306 residues: UDP-3-O-acyl-N-acetylglucosamine deacetylase (306 aa).

Positions 79, 238, and 242 each coordinate Zn(2+). H265 (proton donor) is an active-site residue.

The protein belongs to the LpxC family. Requires Zn(2+) as cofactor.

The enzyme catalyses a UDP-3-O-[(3R)-3-hydroxyacyl]-N-acetyl-alpha-D-glucosamine + H2O = a UDP-3-O-[(3R)-3-hydroxyacyl]-alpha-D-glucosamine + acetate. It participates in glycolipid biosynthesis; lipid IV(A) biosynthesis; lipid IV(A) from (3R)-3-hydroxytetradecanoyl-[acyl-carrier-protein] and UDP-N-acetyl-alpha-D-glucosamine: step 2/6. Its function is as follows. Catalyzes the hydrolysis of UDP-3-O-myristoyl-N-acetylglucosamine to form UDP-3-O-myristoylglucosamine and acetate, the committed step in lipid A biosynthesis. The chain is UDP-3-O-acyl-N-acetylglucosamine deacetylase from Idiomarina loihiensis (strain ATCC BAA-735 / DSM 15497 / L2-TR).